Consider the following 74-residue polypeptide: Conotoxin MiEr93 (74 aa).

Positions 1-22 (MKLTCVLIIAVLFLTAYQLATA) are cleaved as a signal peptide. Residues 23–45 (ASYAKGKQKHRALRPADKHLRLT) constitute a propeptide that is removed on maturation. 3 disulfides stabilise this stretch: Cys48/Cys62, Cys55/Cys66, and Cys61/Cys73.

Belongs to the conotoxin O1 superfamily. As to expression, expressed by the venom duct.

The protein localises to the secreted. In Conus miles (Soldier cone), this protein is Conotoxin MiEr93.